We begin with the raw amino-acid sequence, 272 residues long: MSSATVLDSIIEGVRADVAAREAVISLDEIKERAKAAPPPLNVMAALREPGIGVIAEVKRASPSRGALASIGDPAELAQAYQDGGARVISVLTEQRRFNGSLDDLDAVRAAVSIPVLRKDFIVRPYQIHEARAHGADMLLLIVAALDQPVLESLLERTESLGMTALVEVHTEEEADRALKAGASVIGVNARDLKTLEVDRTVFSRIAPGLPSNVIRVAESGVRGTADLLAYAGAGADAVLVGEGLVTSGDPRSAVADLVTAGTHPSCPKPAR.

This sequence belongs to the TrpC family.

The catalysed reaction is 1-(2-carboxyphenylamino)-1-deoxy-D-ribulose 5-phosphate + H(+) = (1S,2R)-1-C-(indol-3-yl)glycerol 3-phosphate + CO2 + H2O. Its pathway is amino-acid biosynthesis; L-tryptophan biosynthesis; L-tryptophan from chorismate: step 4/5. This Mycolicibacterium smegmatis (strain ATCC 700084 / mc(2)155) (Mycobacterium smegmatis) protein is Indole-3-glycerol phosphate synthase.